A 449-amino-acid chain; its full sequence is NADH-quinone oxidoreductase subunit H (449 aa).

A run of 9 helical transmembrane segments spans residues 26–46, 96–116, 136–156, 177–197, 211–231, 259–279, 298–318, 330–350, and 365–385; these read FWLI…MTLF, PIFI…FAVI, LPVS…GLIL, IISY…YAGT, WYIA…GETN, FFFL…TTLF, WVPL…FIWL, FMAF…LVIA, and WLIG…LDPG. A disordered region spans residues 396 to 449; that stretch reads AERRKLAEAPSLESIPWPPPPPGGAHHRPAVPAGTSANGSSTVIPADPPPRQES.

This sequence belongs to the complex I subunit 1 family. NDH-1 is composed of 14 different subunits. Subunits NuoA, H, J, K, L, M, N constitute the membrane sector of the complex.

It is found in the cell membrane. The catalysed reaction is a quinone + NADH + 5 H(+)(in) = a quinol + NAD(+) + 4 H(+)(out). In terms of biological role, NDH-1 shuttles electrons from NADH, via FMN and iron-sulfur (Fe-S) centers, to quinones in the respiratory chain. The immediate electron acceptor for the enzyme in this species is believed to be ubiquinone. Couples the redox reaction to proton translocation (for every two electrons transferred, four hydrogen ions are translocated across the cytoplasmic membrane), and thus conserves the redox energy in a proton gradient. This subunit may bind ubiquinone. The sequence is that of NADH-quinone oxidoreductase subunit H from Frankia alni (strain DSM 45986 / CECT 9034 / ACN14a).